We begin with the raw amino-acid sequence, 477 residues long: Glycogen synthase (477 aa).

Lys-15 serves as a coordination point for ADP-alpha-D-glucose.

This sequence belongs to the glycosyltransferase 1 family. Bacterial/plant glycogen synthase subfamily.

The catalysed reaction is [(1-&gt;4)-alpha-D-glucosyl](n) + ADP-alpha-D-glucose = [(1-&gt;4)-alpha-D-glucosyl](n+1) + ADP + H(+). Its pathway is glycan biosynthesis; glycogen biosynthesis. Its function is as follows. Synthesizes alpha-1,4-glucan chains using ADP-glucose. This is Glycogen synthase from Salmonella arizonae (strain ATCC BAA-731 / CDC346-86 / RSK2980).